The following is a 493-amino-acid chain: tRNA(Ile)-lysidine synthase, chloroplastic (493 aa).

68–73 contributes to the ATP binding site; that stretch reads SGGQDS.

This sequence belongs to the tRNA(Ile)-lysidine synthase family.

The protein resides in the plastid. It localises to the chloroplast. The catalysed reaction is cytidine(34) in tRNA(Ile2) + L-lysine + ATP = lysidine(34) in tRNA(Ile2) + AMP + diphosphate + H(+). Ligates lysine onto the cytidine present at position 34 of the AUA codon-specific tRNA(Ile) that contains the anticodon CAU, in an ATP-dependent manner. Cytidine is converted to lysidine, thus changing the amino acid specificity of the tRNA from methionine to isoleucine. This Staurastrum punctulatum (Green alga) protein is tRNA(Ile)-lysidine synthase, chloroplastic.